We begin with the raw amino-acid sequence, 155 residues long: Small ribosomal subunit protein uS7 (155 aa).

Belongs to the universal ribosomal protein uS7 family. Part of the 30S ribosomal subunit. Contacts proteins S9 and S11.

Functionally, one of the primary rRNA binding proteins, it binds directly to 16S rRNA where it nucleates assembly of the head domain of the 30S subunit. Is located at the subunit interface close to the decoding center, probably blocks exit of the E-site tRNA. This is Small ribosomal subunit protein uS7 from Thermotoga petrophila (strain ATCC BAA-488 / DSM 13995 / JCM 10881 / RKU-1).